A 129-amino-acid chain; its full sequence is Glycine cleavage system H protein (129 aa).

In terms of domain architecture, Lipoyl-binding spans 24–106 (SYTVGISEHA…FGDGWFFRVM (83 aa)). Lysine 65 is subject to N6-lipoyllysine.

This sequence belongs to the GcvH family. As to quaternary structure, the glycine cleavage system is composed of four proteins: P, T, L and H. The cofactor is (R)-lipoate.

Functionally, the glycine cleavage system catalyzes the degradation of glycine. The H protein shuttles the methylamine group of glycine from the P protein to the T protein. This chain is Glycine cleavage system H protein, found in Shewanella sediminis (strain HAW-EB3).